Consider the following 495-residue polypeptide: Methyl viologen resistance protein SmvA (495 aa).

Transmembrane regions (helical) follow at residues 5-25 (WLTLVIIVLVYIPVAIDATVL), 44-64 (LWIIDIYSLVMAGMVLPMGAL), 73-93 (LLMLGGTLFGLASLAAAFSHT), 96-116 (WLIATRVLLAIGAAMIVPATL), 135-155 (VWAAVGSGGAAFGPLIGGILL), 158-178 (FYWGSVFLINVPIVLVVMGLT), 192-212 (PLNLGHAVMLIIAILLLVYSA), 220-240 (LSLWVISFTLLTGALLLGLFI), 260-280 (IILSGVVMAMTAMITLVGFEL), 299-319 (VFMLPVMVASGFSGPIAGVLV), 327-347 (VATGGMALSALSFYGLAMTDF), 357-377 (LMALLGFSAASALLASTSAIM), 391-411 (IETMAYELGAGLGIAIFGLLL), and 469-489 (VALSSAGSMLLLLAVGMWFSL).

Belongs to the major facilitator superfamily. TCR/Tet family.

The protein resides in the cell inner membrane. Its function is as follows. Major efflux pump for acriflavine and other quaternary ammonium compounds (QACs). Also required for resistance to methyl viologen. In Salmonella typhimurium (strain LT2 / SGSC1412 / ATCC 700720), this protein is Methyl viologen resistance protein SmvA (smvA).